A 196-amino-acid polypeptide reads, in one-letter code: DnaA initiator-associating protein DiaA (196 aa).

One can recognise an SIS domain in the interval 34-196; sequence LVQSLLNGNK…DNTLFPHQND (163 aa).

It belongs to the SIS family. DiaA subfamily. As to quaternary structure, homotetramer; dimer of dimers.

Functionally, required for the timely initiation of chromosomal replication via direct interactions with the DnaA initiator protein. The protein is DnaA initiator-associating protein DiaA of Yersinia pestis bv. Antiqua (strain Antiqua).